The sequence spans 266 residues: 3-methyl-2-oxobutanoate hydroxymethyltransferase 2 (266 aa).

Positions 45 and 84 each coordinate Mg(2+). 3-methyl-2-oxobutanoate contacts are provided by residues D45–S46, D84, and K112. E114 is a binding site for Mg(2+). The active-site Proton acceptor is the E181.

Belongs to the PanB family. In terms of assembly, homodecamer; pentamer of dimers. The cofactor is Mg(2+).

It is found in the cytoplasm. The catalysed reaction is 3-methyl-2-oxobutanoate + (6R)-5,10-methylene-5,6,7,8-tetrahydrofolate + H2O = 2-dehydropantoate + (6S)-5,6,7,8-tetrahydrofolate. The protein operates within cofactor biosynthesis; (R)-pantothenate biosynthesis; (R)-pantoate from 3-methyl-2-oxobutanoate: step 1/2. In terms of biological role, catalyzes the reversible reaction in which hydroxymethyl group from 5,10-methylenetetrahydrofolate is transferred onto alpha-ketoisovalerate to form ketopantoate. This Pseudomonas fluorescens (strain ATCC BAA-477 / NRRL B-23932 / Pf-5) protein is 3-methyl-2-oxobutanoate hydroxymethyltransferase 2.